Consider the following 413-residue polypeptide: Inactive squalene synthase 2 (413 aa).

An N-acetylglycine modification is found at G2. The next 2 membrane-spanning stretches (helical) occupy residues 283–303 and 390–410; these read AIFQSCAIPQIVAIGTLALCY and AIFVVMFVLLLAIVVVYLKAN.

The protein belongs to the phytoene/squalene synthase family. Requires Mg(2+) as cofactor. Mn(2+) serves as cofactor. Mostly expressed in hypocotyls, leaves and cotyledons, and, to a lower extent, in stems.

The protein localises to the endoplasmic reticulum membrane. The sequence is that of Inactive squalene synthase 2 from Arabidopsis thaliana (Mouse-ear cress).